We begin with the raw amino-acid sequence, 434 residues long: Maltoporin (434 aa).

The first 25 residues, 1-25, serve as a signal peptide directing secretion; the sequence is MKMKAKWLPIAAAVTAALASQAAFA.

The protein belongs to the porin LamB (TC 1.B.3) family. In terms of assembly, homotrimer formed of three 18-stranded antiparallel beta-barrels, containing three independent channels.

The protein resides in the cell outer membrane. The enzyme catalyses beta-maltose(in) = beta-maltose(out). Involved in the transport of maltose and maltodextrins. This chain is Maltoporin, found in Aeromonas hydrophila.